We begin with the raw amino-acid sequence, 148 residues long: Large ribosomal subunit protein bL9 (148 aa).

It belongs to the bacterial ribosomal protein bL9 family.

Binds to the 23S rRNA. The sequence is that of Large ribosomal subunit protein bL9 from Pseudomonas fluorescens (strain ATCC BAA-477 / NRRL B-23932 / Pf-5).